The sequence spans 291 residues: Methylsterol monooxygenase 1 (291 aa).

Transmembrane regions (helical) follow at residues 55–75 and 100–120; these read LIVH…FQFL and MLLF…YYFT. The Fatty acid hydroxylase domain occupies 145–274; it reads CAVIEDTWHY…FTWWDRLFDT (130 aa). The Histidine box-1 signature appears at 157–161; that stretch reads HRALH. The Histidine box-2 motif lies at 170–174; it reads HKVHH. The helical transmembrane segment at 199–219 threads the bilayer; it reads FFIGTMVFCNHMILLWAWVTF. The Histidine box-3 signature appears at 249–255; the sequence is FHDFHHM.

The protein belongs to the sterol desaturase family. The cofactor is Fe cation.

The protein resides in the endoplasmic reticulum membrane. It carries out the reaction 4,4-dimethyl-5alpha-cholest-7-en-3beta-ol + 6 Fe(II)-[cytochrome b5] + 3 O2 + 5 H(+) = 4alpha-carboxy-4beta-methyl-5alpha-cholest-7-ene-3beta-ol + 6 Fe(III)-[cytochrome b5] + 4 H2O. Its pathway is steroid biosynthesis; zymosterol biosynthesis; zymosterol from lanosterol: step 3/6. Its function is as follows. Catalyzes the first step in the removal of the two C-4 methyl groups of 4,4-dimethylzymosterol. In Danio rerio (Zebrafish), this protein is Methylsterol monooxygenase 1 (msmo1).